We begin with the raw amino-acid sequence, 178 residues long: Ribosome maturation factor RimM (178 aa).

In terms of domain architecture, PRC barrel spans 100–173 (ADEYFIHQLY…QIVVRLLPGL (74 aa)).

This sequence belongs to the RimM family. Binds ribosomal protein uS19.

It localises to the cytoplasm. An accessory protein needed during the final step in the assembly of 30S ribosomal subunit, possibly for assembly of the head region. Essential for efficient processing of 16S rRNA. May be needed both before and after RbfA during the maturation of 16S rRNA. It has affinity for free ribosomal 30S subunits but not for 70S ribosomes. In Roseiflexus castenholzii (strain DSM 13941 / HLO8), this protein is Ribosome maturation factor RimM.